Consider the following 456-residue polypeptide: Dothistromin biosynthesis regulatory protein aflJ (456 aa).

Positions 74 to 143 (LARENQLLAC…PKPGYVAHSG (70 aa)) constitute an HTH iclR-type domain. The segment at residues 104–123 (YSDVADLACVPVDQLRRIAR) is a DNA-binding region (H-T-H motif). The span at 290 to 300 (KLHNGLSTPPE) shows a compositional bias: polar residues. The interval 290–314 (KLHNGLSTPPESDTGPAARAAKASE) is disordered.

It is found in the nucleus. Transcription coactivator involved in regulation of the dothistromin biosynthesis gene cluster with aflR. This is Dothistromin biosynthesis regulatory protein aflJ from Dothistroma septosporum (strain NZE10 / CBS 128990) (Red band needle blight fungus).